The sequence spans 768 residues: MEEELKCPVCGSLFREPIILPCSHNVCLPCARTIAVQTPDGEQHLPPPLLLSRGAAAAATPPDQDAAAGATSGGAGANTAGGLGGGATGGGDHADKLSLYSETDSGYGSYTPSLKSPNGVRVLPMVPAPPGSSAAAARGAACSSLCSSSSSITCPQCHRSASLDHRGLRGFQRNRLLEGIVQRYQQGRGVVPGAAAAPAVAICQLCDRTPPEPAATLCEQCDVLYCATCQLKCHPSRGPFAKHRLVQPPPPPTPPEATPAVTGTSTASSAGGCRSPGGAGASAPRKFPTCPEHEMENYSMYCVSCRSPVCYMCLEEGRHSKHEVKPLGATWKQHKAQLSQALNGVSDKAKEAKEFLVQLKNILQQIQENGLDYEACLVAQCDALVDALTRQKAKLLTKVTKEREHKLKMVWDQINHCTLKLRQSTGLMEYCLEVIKEDDPSGFLQISDALIKRVQTSQEQWVKGALEPKVSAEFDLTLDSEPLLQAIHQLDFVQMKLPPVPLLQLEKCCTRNNSVTLAWRTPPFTHSPAEGYILELDDGDGGQFREVYVGKETLCTIDGLHFNSTYNARVKAFNSSGVGPYSKTVVLQTSDVAWFTFDPNSGHRDIILSNDNQTATCSSYDDRVVLGTAAFSKGVHYWELHVDRYDNHPDPAFGVARASVVKDMMLGKDDKAWAMYVDNNRSWFMHCNSHTNRTEGGVCKGATVGVLLDLNKHTLTFFINGQQQGPTAFSHVDGVFMPALSLNRNVQVTLHTGLEVPTNLGRPKLSGN.

The RING-type; degenerate zinc-finger motif lies at Cys7 to Glu42. A compositionally biased stretch (low complexity) spans Ala55–Ala70. Disordered regions lie at residues Ala55–Gly74 and Gln247–Pro284. A B box-type 1; degenerate zinc finger spans residues Ala201–Pro248. Over residues Gln247 to Ala257 the composition is skewed to pro residues. The B box-type 2 zinc finger occupies Arg285 to Leu327. Residues Cys290, His293, Cys313, and His319 each contribute to the Zn(2+) site. Positions Lys332–Asn369 form a coiled coil. Residues Ile435–Val493 form the COS domain. The Fibronectin type-III domain occupies Pro498–Val592. The B30.2/SPRY domain maps to Asn574 to Leu765.

It localises to the cytoplasm. The protein resides in the cytoskeleton. This chain is Tripartite motif-containing protein 67 (Trim67), found in Mus musculus (Mouse).